The primary structure comprises 335 residues: Biotin synthase (335 aa).

A Radical SAM core domain is found at 39–267; it reads TKIQVCKLIS…ASDVRLSAGR (229 aa). 3 residues coordinate [4Fe-4S] cluster: Cys-54, Cys-58, and Cys-61. Residues Cys-98, Cys-130, Cys-190, and Arg-262 each coordinate [2Fe-2S] cluster.

It belongs to the radical SAM superfamily. Biotin synthase family. Homodimer. The cofactor is [4Fe-4S] cluster. It depends on [2Fe-2S] cluster as a cofactor.

The enzyme catalyses (4R,5S)-dethiobiotin + (sulfur carrier)-SH + 2 reduced [2Fe-2S]-[ferredoxin] + 2 S-adenosyl-L-methionine = (sulfur carrier)-H + biotin + 2 5'-deoxyadenosine + 2 L-methionine + 2 oxidized [2Fe-2S]-[ferredoxin]. It functions in the pathway cofactor biosynthesis; biotin biosynthesis; biotin from 7,8-diaminononanoate: step 2/2. Functionally, catalyzes the conversion of dethiobiotin (DTB) to biotin by the insertion of a sulfur atom into dethiobiotin via a radical-based mechanism. The chain is Biotin synthase from Nostoc punctiforme (strain ATCC 29133 / PCC 73102).